We begin with the raw amino-acid sequence, 61 residues long: Small ribosomal subunit protein uS14 (61 aa).

Zn(2+) contacts are provided by Cys24, Cys27, Cys40, and Cys43.

It belongs to the universal ribosomal protein uS14 family. Zinc-binding uS14 subfamily. As to quaternary structure, part of the 30S ribosomal subunit. Contacts proteins S3 and S10. It depends on Zn(2+) as a cofactor.

Functionally, binds 16S rRNA, required for the assembly of 30S particles and may also be responsible for determining the conformation of the 16S rRNA at the A site. This is Small ribosomal subunit protein uS14 from Anoxybacillus flavithermus (strain DSM 21510 / WK1).